The chain runs to 367 residues: 7,8-didemethyl-8-hydroxy-5-deazariboflavin synthase (367 aa).

Residues L39 to N275 form the Radical SAM core domain. [4Fe-4S] cluster contacts are provided by C53, C57, and C60.

It belongs to the radical SAM superfamily. CofG family. As to quaternary structure, consists of two subunits, CofG and CofH. [4Fe-4S] cluster serves as cofactor.

It carries out the reaction 5-amino-5-(4-hydroxybenzyl)-6-(D-ribitylimino)-5,6-dihydrouracil + S-adenosyl-L-methionine = 7,8-didemethyl-8-hydroxy-5-deazariboflavin + 5'-deoxyadenosine + L-methionine + NH4(+) + H(+). The protein operates within cofactor biosynthesis; coenzyme F0 biosynthesis. Functionally, catalyzes the radical-mediated synthesis of 7,8-didemethyl-8-hydroxy-5-deazariboflavin from 5-amino-5-(4-hydroxybenzyl)-6-(D-ribitylimino)-5,6-dihydrouracil. This is 7,8-didemethyl-8-hydroxy-5-deazariboflavin synthase from Halobacterium salinarum (strain ATCC 29341 / DSM 671 / R1).